Here is a 408-residue protein sequence, read N- to C-terminus: Zinc finger and SCAN domain-containing protein 1 (408 aa).

The interval 1 to 34 (MLPRPKAPASPRRPQTPTPSEQDADPGPASPRDT) is disordered. The SCAN box domain maps to 38–120 (RLRFRQFQYH…SLVEDLTQMC (83 aa)). 3 disordered regions span residues 136–155 (WSFG…EPSQ), 177–203 (LETT…LLGS), and 215–273 (DEPE…GGTQ). Polar residues predominate over residues 177-187 (LETTQLQQSLH). 2 consecutive C2H2-type zinc fingers follow at residues 292–314 (FQCA…QKTH) and 320–342 (FPCP…GKIH). Positions 344–379 (LEPPRKKAPRSKGPRESVPPRDGAQGPVAPRSPKRP) are disordered. The C2H2-type 3 zinc finger occupies 380-402 (FQCSVCGKAFPWMVHLIDHQKLH).

It is found in the nucleus. In terms of biological role, may be involved in transcriptional regulation. The chain is Zinc finger and SCAN domain-containing protein 1 (ZSCAN1) from Homo sapiens (Human).